Here is a 197-residue protein sequence, read N- to C-terminus: Beta-crystallin A2 (197 aa).

Residues 1 to 11 (MSGTLSQGSSP) are N-terminal arm. 2 consecutive Beta/gamma crystallin 'Greek key' domains span residues 12 to 52 (ARLT…KVES) and 53 to 99 (GAWV…RPLL). The tract at residues 100–105 (CANHSD) is connecting peptide. Beta/gamma crystallin 'Greek key' domains are found at residues 106-147 (SRVT…KVTS) and 148-196 (GAWV…RRVQ).

It belongs to the beta/gamma-crystallin family. As to quaternary structure, homo/heterodimer, or complexes of higher-order. The structure of beta-crystallin oligomers seems to be stabilized through interactions between the N-terminal arms.

In terms of biological role, crystallins are the dominant structural components of the vertebrate eye lens. The chain is Beta-crystallin A2 (CRYBA2) from Macropus fuliginosus (Western gray kangaroo).